We begin with the raw amino-acid sequence, 336 residues long: Holliday junction branch migration complex subunit RuvB (336 aa).

The tract at residues 4-185 (MDERLLSGES…FGVLSRLEYY (182 aa)) is large ATPase domain (RuvB-L). ATP is bound by residues leucine 24, arginine 25, glycine 66, lysine 69, threonine 70, threonine 71, 132–134 (EDF), arginine 175, tyrosine 185, and arginine 222. Threonine 70 lines the Mg(2+) pocket. A small ATPAse domain (RuvB-S) region spans residues 186–256 (TVDQLSAIVE…ITQMALELLQ (71 aa)). A head domain (RuvB-H) region spans residues 259 to 336 (KLGLDHIDHK…EHFGMEMPKV (78 aa)). Residues arginine 314 and arginine 319 each contribute to the DNA site.

Belongs to the RuvB family. Homohexamer. Forms an RuvA(8)-RuvB(12)-Holliday junction (HJ) complex. HJ DNA is sandwiched between 2 RuvA tetramers; dsDNA enters through RuvA and exits via RuvB. An RuvB hexamer assembles on each DNA strand where it exits the tetramer. Each RuvB hexamer is contacted by two RuvA subunits (via domain III) on 2 adjacent RuvB subunits; this complex drives branch migration. In the full resolvosome a probable DNA-RuvA(4)-RuvB(12)-RuvC(2) complex forms which resolves the HJ.

Its subcellular location is the cytoplasm. The enzyme catalyses ATP + H2O = ADP + phosphate + H(+). Its function is as follows. The RuvA-RuvB-RuvC complex processes Holliday junction (HJ) DNA during genetic recombination and DNA repair, while the RuvA-RuvB complex plays an important role in the rescue of blocked DNA replication forks via replication fork reversal (RFR). RuvA specifically binds to HJ cruciform DNA, conferring on it an open structure. The RuvB hexamer acts as an ATP-dependent pump, pulling dsDNA into and through the RuvAB complex. RuvB forms 2 homohexamers on either side of HJ DNA bound by 1 or 2 RuvA tetramers; 4 subunits per hexamer contact DNA at a time. Coordinated motions by a converter formed by DNA-disengaged RuvB subunits stimulates ATP hydrolysis and nucleotide exchange. Immobilization of the converter enables RuvB to convert the ATP-contained energy into a lever motion, pulling 2 nucleotides of DNA out of the RuvA tetramer per ATP hydrolyzed, thus driving DNA branch migration. The RuvB motors rotate together with the DNA substrate, which together with the progressing nucleotide cycle form the mechanistic basis for DNA recombination by continuous HJ branch migration. Branch migration allows RuvC to scan DNA until it finds its consensus sequence, where it cleaves and resolves cruciform DNA. The protein is Holliday junction branch migration complex subunit RuvB of Bacillus cereus (strain ZK / E33L).